A 503-amino-acid chain; its full sequence is ATP synthase subunit alpha (503 aa).

169–176 (GDRQTGKT) contributes to the ATP binding site.

Belongs to the ATPase alpha/beta chains family. In terms of assembly, F-type ATPases have 2 components, CF(1) - the catalytic core - and CF(0) - the membrane proton channel. CF(1) has five subunits: alpha(3), beta(3), gamma(1), delta(1), epsilon(1). CF(0) has three main subunits: a(1), b(2) and c(9-12). The alpha and beta chains form an alternating ring which encloses part of the gamma chain. CF(1) is attached to CF(0) by a central stalk formed by the gamma and epsilon chains, while a peripheral stalk is formed by the delta and b chains.

Its subcellular location is the cell membrane. The enzyme catalyses ATP + H2O + 4 H(+)(in) = ADP + phosphate + 5 H(+)(out). Produces ATP from ADP in the presence of a proton gradient across the membrane. The alpha chain is a regulatory subunit. The sequence is that of ATP synthase subunit alpha from Staphylococcus epidermidis (strain ATCC 35984 / DSM 28319 / BCRC 17069 / CCUG 31568 / BM 3577 / RP62A).